The sequence spans 334 residues: Type II methyltransferase M.NlaIII (334 aa).

Belongs to the N(4)/N(6)-methyltransferase family.

The enzyme catalyses a 2'-deoxyadenosine in DNA + S-adenosyl-L-methionine = an N(6)-methyl-2'-deoxyadenosine in DNA + S-adenosyl-L-homocysteine + H(+). A methylase, recognizes the double-stranded sequence 5'-CATG-3', methylates A-2 on both strands and protects the DNA from cleavage by the NlaIII endonuclease. This chain is Type II methyltransferase M.NlaIII (nlaIIIM), found in Neisseria lactamica.